We begin with the raw amino-acid sequence, 37 residues long: Large ribosomal subunit protein bL36c (37 aa).

It belongs to the bacterial ribosomal protein bL36 family.

It localises to the plastid. The protein localises to the chloroplast. In Pisum sativum (Garden pea), this protein is Large ribosomal subunit protein bL36c (rpl36).